Reading from the N-terminus, the 592-residue chain is Bifunctional dolabella-3,7-dien-18-ol synthase/dolathalia-3,7,11-triene synthase TPS20, chloroplastic (592 aa).

Residues 1–52 (MEAITKNGSLSQTLVHCGPKSLSSFIPVRCLRFSKNPFPKKLVVTRARTSIN) constitute a chloroplast transit peptide. D349, D353, D491, T495, and E499 together coordinate Mg(2+). A DDXXD motif motif is present at residues 349 to 353 (DDLYD).

Belongs to the terpene synthase family. Tpsa subfamily. Mg(2+) is required as a cofactor. Requires Mn(2+) as cofactor.

The protein localises to the plastid. Its subcellular location is the chloroplast. It catalyses the reaction (2E,6E,10E)-geranylgeranyl diphosphate + H2O = (3E,7E)-dolabella-3,7-dien-18-ol + diphosphate. The catalysed reaction is (2E,6E,10E)-geranylgeranyl diphosphate = (3E,7E)-dolathalia-3,7,11-triene + diphosphate. The protein operates within secondary metabolite biosynthesis; terpenoid biosynthesis. Functionally, involved in the biosynthesis of diterpenes in roots. Possesses dolabella-3,7-dien-18-ol synthase activity and dolathalia-3,7,11-triene synthase activity in vitro. Catalyzes the formation of dolabella-3,7-dien-18-ol and dolathalia-3,7,11-triene from geranygeranyl diphosphate (GGPP). Does not seem to be involved in sesquiterpene biosynthesis. The chain is Bifunctional dolabella-3,7-dien-18-ol synthase/dolathalia-3,7,11-triene synthase TPS20, chloroplastic from Arabidopsis thaliana (Mouse-ear cress).